Here is a 256-residue protein sequence, read N- to C-terminus: 7-cyano-7-deazaguanine synthase (256 aa).

The disordered stretch occupies residues Met1–Ser22. Polar residues predominate over residues Ala8–Ser22. An ATP-binding site is contributed by Leu30–Leu40. Positions 220, 230, 233, and 236 each coordinate Zn(2+).

It belongs to the QueC family. Zn(2+) is required as a cofactor.

It carries out the reaction 7-carboxy-7-deazaguanine + NH4(+) + ATP = 7-cyano-7-deazaguanine + ADP + phosphate + H2O + H(+). Its pathway is purine metabolism; 7-cyano-7-deazaguanine biosynthesis. Catalyzes the ATP-dependent conversion of 7-carboxy-7-deazaguanine (CDG) to 7-cyano-7-deazaguanine (preQ(0)). The protein is 7-cyano-7-deazaguanine synthase of Psychrobacter sp. (strain PRwf-1).